Consider the following 430-residue polypeptide: Aspartate aminotransferase, mitochondrial (430 aa).

The transit peptide at 1 to 29 (MALLHSGRVLSGVASAFHPGLAAAASARA) directs the protein to the mitochondrion. Position 48 is a phosphothreonine (Thr-48). Lys-59 bears the N6-acetyllysine mark. Gly-65 lines the substrate pocket. Position 73 is an N6-acetyllysine; alternate (Lys-73). Lys-73 carries the post-translational modification N6-succinyllysine; alternate. Lys-82 is subject to N6-acetyllysine. Lys-90 carries the N6-acetyllysine; alternate modification. Lys-90 bears the N6-succinyllysine; alternate mark. Tyr-96 carries the 3'-nitrotyrosine; alternate modification. A Phosphotyrosine; alternate modification is found at Tyr-96. Lys-107, Lys-122, and Lys-159 each carry N6-acetyllysine; alternate. Residues Lys-107, Lys-122, and Lys-159 each carry the N6-succinyllysine; alternate modification. Residue Trp-162 participates in substrate binding. N6-acetyllysine; alternate is present on Lys-185. Lys-185 is modified (N6-succinyllysine; alternate). Asn-215 contacts substrate. An N6-succinyllysine modification is found at Lys-227. Lys-234 carries the post-translational modification N6-acetyllysine. N6-acetyllysine; alternate is present on residues Lys-279 and Lys-296. The residue at position 279 (Lys-279) is an N6-(pyridoxal phosphate)lysine; alternate. Lys-296 carries the N6-succinyllysine; alternate modification. Lys-302 carries the post-translational modification N6-acetyllysine. The residue at position 309 (Lys-309) is an N6-acetyllysine; alternate. Lys-309 bears the N6-succinyllysine; alternate mark. The residue at position 313 (Arg-313) is an Asymmetric dimethylarginine. Lys-345 is modified (N6-acetyllysine). Lys-363 is modified (N6-acetyllysine; alternate). The residue at position 363 (Lys-363) is an N6-succinyllysine; alternate. N6-acetyllysine is present on residues Lys-364 and Lys-387. Lys-396 and Lys-404 each carry N6-acetyllysine; alternate. N6-succinyllysine; alternate occurs at positions 396 and 404. Arg-407 is a binding site for substrate.

This sequence belongs to the class-I pyridoxal-phosphate-dependent aminotransferase family. Homodimer. Pyridoxal 5'-phosphate is required as a cofactor.

The protein localises to the mitochondrion matrix. It localises to the cell membrane. The enzyme catalyses L-aspartate + 2-oxoglutarate = oxaloacetate + L-glutamate. It carries out the reaction L-kynurenine + 2-oxoglutarate = kynurenate + L-glutamate + H2O. Catalyzes the irreversible transamination of the L-tryptophan metabolite L-kynurenine to form kynurenic acid (KA). As a member of the malate-aspartate shuttle, it has a key role in the intracellular NAD(H) redox balance. Is important for metabolite exchange between mitochondria and cytosol, and for amino acid metabolism. Facilitates cellular uptake of long-chain free fatty acids. The sequence is that of Aspartate aminotransferase, mitochondrial (GOT2) from Sus scrofa (Pig).